Here is a 90-residue protein sequence, read N- to C-terminus: MGSSSFLVLMVSLALVTLVAVEGVKKGIEKAGVCPADNVRCFKSDPPQCHTDQDCLGERKCCYLHCGFKCVIPVKELEEGGNKDEDVSRP.

The signal sequence occupies residues 1–23; sequence MGSSSFLVLMVSLALVTLVAVEG. The region spanning 27–74 is the WAP domain; it reads GIEKAGVCPADNVRCFKSDPPQCHTDQDCLGERKCCYLHCGFKCVIPV. Intrachain disulfides connect Cys34-Cys62, Cys41-Cys66, Cys49-Cys61, and Cys55-Cys70.

The protein resides in the secreted. Antibacterial protein. Putative acid-stable proteinase inhibitor. In Pongo abelii (Sumatran orangutan), this protein is WAP four-disulfide core domain protein 12 (WFDC12).